The following is a 365-amino-acid chain: Mitogen-activated protein kinase HOG1A (365 aa).

The 280-residue stretch at 24 to 303 folds into the Protein kinase domain; sequence YTDLQPVGMG…AADALAHPYL (280 aa). Residues 30–38 and lysine 53 contribute to the ATP site; that span reads VGMGAFGLL. The active-site Proton acceptor is the aspartate 145. The residue at position 175 (threonine 175) is a Phosphothreonine. The TXY signature appears at 175–177; sequence TGY. A Phosphotyrosine modification is found at tyrosine 177.

Belongs to the protein kinase superfamily. Ser/Thr protein kinase family. MAP kinase subfamily. HOG1 sub-subfamily. Mg(2+) is required as a cofactor. In terms of processing, phosphorylated. Dually phosphorylated on Thr-175 and Tyr-177, which activates the enzyme. Rapidly dephosphorylated upon either hypo- or hyperosmotic shock.

The protein resides in the cytoplasm. Its subcellular location is the nucleus. The catalysed reaction is L-seryl-[protein] + ATP = O-phospho-L-seryl-[protein] + ADP + H(+). The enzyme catalyses L-threonyl-[protein] + ATP = O-phospho-L-threonyl-[protein] + ADP + H(+). Its activity is regulated as follows. Activated by tyrosine and threonine phosphorylation. Functionally, proline-directed serine/threonine-protein kinase involved in a signal transduction pathway that is activated by changes in the osmolarity of the extracellular environment. Controls osmotic regulation of transcription of target genes. The sequence is that of Mitogen-activated protein kinase HOG1A (HOG1A) from Wallemia ichthyophaga (strain EXF-994 / CBS 113033).